The primary structure comprises 273 residues: Dermonecrotic toxin LruSicTox-alphaIC1d (273 aa).

Residue H5 is part of the active site. Mg(2+) is bound by residues E25 and D27. H41 serves as the catalytic Nucleophile. 2 cysteine pairs are disulfide-bonded: C45–C51 and C47–C190. D85 contributes to the Mg(2+) binding site.

The protein belongs to the arthropod phospholipase D family. Class II subfamily. Requires Mg(2+) as cofactor. As to expression, expressed by the venom gland.

It is found in the secreted. It carries out the reaction an N-(acyl)-sphingosylphosphocholine = an N-(acyl)-sphingosyl-1,3-cyclic phosphate + choline. The enzyme catalyses an N-(acyl)-sphingosylphosphoethanolamine = an N-(acyl)-sphingosyl-1,3-cyclic phosphate + ethanolamine. The catalysed reaction is a 1-acyl-sn-glycero-3-phosphocholine = a 1-acyl-sn-glycero-2,3-cyclic phosphate + choline. It catalyses the reaction a 1-acyl-sn-glycero-3-phosphoethanolamine = a 1-acyl-sn-glycero-2,3-cyclic phosphate + ethanolamine. Functionally, dermonecrotic toxins cleave the phosphodiester linkage between the phosphate and headgroup of certain phospholipids (sphingolipid and lysolipid substrates), forming an alcohol (often choline) and a cyclic phosphate. This toxin acts on sphingomyelin (SM). It may also act on ceramide phosphoethanolamine (CPE), lysophosphatidylcholine (LPC) and lysophosphatidylethanolamine (LPE), but not on lysophosphatidylserine (LPS), and lysophosphatidylglycerol (LPG). It acts by transphosphatidylation, releasing exclusively cyclic phosphate products as second products. Induces dermonecrosis, hemolysis, increased vascular permeability, edema, inflammatory response, and platelet aggregation. This is Dermonecrotic toxin LruSicTox-alphaIC1d from Loxosceles rufescens (Mediterranean recluse spider).